The primary structure comprises 117 residues: Large ribosomal subunit protein uL23 (117 aa).

Belongs to the universal ribosomal protein uL23 family. In terms of assembly, part of the 50S ribosomal subunit. Contacts protein L29, and trigger factor when it is bound to the ribosome.

In terms of biological role, one of the early assembly proteins it binds 23S rRNA. One of the proteins that surrounds the polypeptide exit tunnel on the outside of the ribosome. Forms the main docking site for trigger factor binding to the ribosome. This is Large ribosomal subunit protein uL23 from Acetivibrio thermocellus (strain ATCC 27405 / DSM 1237 / JCM 9322 / NBRC 103400 / NCIMB 10682 / NRRL B-4536 / VPI 7372) (Clostridium thermocellum).